A 188-amino-acid polypeptide reads, in one-letter code: dCTP deaminase (188 aa).

Residues 111–116 (KSTYAR), 135–137 (TLE), glutamine 156, tyrosine 170, and glutamine 180 contribute to the dCTP site. Glutamate 137 (proton donor/acceptor) is an active-site residue.

The protein belongs to the dCTP deaminase family. As to quaternary structure, homotrimer.

The enzyme catalyses dCTP + H2O + H(+) = dUTP + NH4(+). Its pathway is pyrimidine metabolism; dUMP biosynthesis; dUMP from dCTP (dUTP route): step 1/2. In terms of biological role, catalyzes the deamination of dCTP to dUTP. The polypeptide is dCTP deaminase (Acidithiobacillus ferrooxidans (strain ATCC 23270 / DSM 14882 / CIP 104768 / NCIMB 8455) (Ferrobacillus ferrooxidans (strain ATCC 23270))).